A 284-amino-acid chain; its full sequence is Esterase alnB (284 aa).

Residues Ser-93, Asp-226, and His-255 each act as charge relay system in the active site.

It belongs to the LovG family.

The protein operates within polyketide biosynthesis. In terms of biological role, esterase; part of the gene cluster that mediates the biosynthesis of asperlin, a polyketide showing anti-inflammatory, antitumor and antibiotic activities. The first step of the asperlin biosynthesis is the production of the intermediate 2,4,6-octatrienoic acid by the highly redusing polyketide synthase alnA with cleavage of the PKS product by the esterase alnB. 2,4,6-octatrienoic acid is further converted to asperlin via several steps involving the remaining enzymes from the cluster. This Emericella nidulans (strain FGSC A4 / ATCC 38163 / CBS 112.46 / NRRL 194 / M139) (Aspergillus nidulans) protein is Esterase alnB.